We begin with the raw amino-acid sequence, 858 residues long: DNA mismatch repair protein MutS (858 aa).

Residue 611-618 (GPNMGGKS) participates in ATP binding.

Belongs to the DNA mismatch repair MutS family.

This protein is involved in the repair of mismatches in DNA. It is possible that it carries out the mismatch recognition step. This protein has a weak ATPase activity. In Actinobacillus succinogenes (strain ATCC 55618 / DSM 22257 / CCUG 43843 / 130Z), this protein is DNA mismatch repair protein MutS.